The sequence spans 55 residues: Large ribosomal subunit protein bL33 (55 aa).

It belongs to the bacterial ribosomal protein bL33 family.

The chain is Large ribosomal subunit protein bL33 from Hyphomonas neptunium (strain ATCC 15444).